Reading from the N-terminus, the 325-residue chain is uncharacterized protein (325 aa).

Composition is skewed to polar residues over residues 1–21 and 29–57; these read MSYQQRANDSMNSAKQYSSSA and EPFSSSGAPQNRNFDTSYTSEIPSNSSRA. The segment at 1–325 is disordered; it reads MSYQQRANDS…LKTGHHSERY (325 aa). Residues 86 to 109 show a composition bias toward basic and acidic residues; it reads ESRKKEQSDVRGGDTSYSRRHDDS. 2 stretches are compositionally biased toward polar residues: residues 114–167 and 174–193; these read NKYS…TTQG and YSQSYPTDTYGSRQKATPSD. Composition is skewed to low complexity over residues 200–210 and 252–278; these read YDYSSSGSHTH and ATDTTAEANRRAATGTRNARTTAQRNA. Over residues 282 to 325 the composition is skewed to basic and acidic residues; it reads EDEHVSMGDKMKGNMEKMAGKLTRDPELVQKGEDLKTGHHSERY.

This is an uncharacterized protein from Schizosaccharomyces pombe (strain 972 / ATCC 24843) (Fission yeast).